A 545-amino-acid chain; its full sequence is CTP synthase (545 aa).

Positions 1-266 are amidoligase domain; the sequence is MTTNYIFVTG…DDYICKRFSL (266 aa). Position 14 (Ser14) interacts with CTP. Ser14 is a binding site for UTP. Residues 15–20 and Asp72 each bind ATP; that span reads SLGKGI. Positions 72 and 140 each coordinate Mg(2+). CTP-binding positions include 147–149, 187–192, and Lys223; these read DIE and KTKPTQ. Residues 187 to 192 and Lys223 contribute to the UTP site; that span reads KTKPTQ. 239 to 241 is a binding site for ATP; the sequence is KDV. One can recognise a Glutamine amidotransferase type-1 domain in the interval 291-542; it reads NIGMVGKYVE…VKAASEYQKR (252 aa). An L-glutamine-binding site is contributed by Gly352. The active-site Nucleophile; for glutamine hydrolysis is the Cys379. Residues 380–383, Glu403, and Arg470 each bind L-glutamine; that span reads LGMQ. Active-site residues include His515 and Glu517.

This sequence belongs to the CTP synthase family. Homotetramer.

It carries out the reaction UTP + L-glutamine + ATP + H2O = CTP + L-glutamate + ADP + phosphate + 2 H(+). The catalysed reaction is L-glutamine + H2O = L-glutamate + NH4(+). The enzyme catalyses UTP + NH4(+) + ATP = CTP + ADP + phosphate + 2 H(+). It functions in the pathway pyrimidine metabolism; CTP biosynthesis via de novo pathway; CTP from UDP: step 2/2. With respect to regulation, allosterically activated by GTP, when glutamine is the substrate; GTP has no effect on the reaction when ammonia is the substrate. The allosteric effector GTP functions by stabilizing the protein conformation that binds the tetrahedral intermediate(s) formed during glutamine hydrolysis. Inhibited by the product CTP, via allosteric rather than competitive inhibition. Its function is as follows. Catalyzes the ATP-dependent amination of UTP to CTP with either L-glutamine or ammonia as the source of nitrogen. Regulates intracellular CTP levels through interactions with the four ribonucleotide triphosphates. The chain is CTP synthase from Erwinia tasmaniensis (strain DSM 17950 / CFBP 7177 / CIP 109463 / NCPPB 4357 / Et1/99).